A 346-amino-acid chain; its full sequence is Large ribosomal subunit protein uL3 (346 aa).

The interval 324–346 is disordered; sequence KPPKKKPPVERPQITYVSRESKQ.

The protein belongs to the universal ribosomal protein uL3 family. Part of the 50S ribosomal subunit. Forms a cluster with proteins L14 and L24e.

One of the primary rRNA binding proteins, it binds directly near the 3'-end of the 23S rRNA, where it nucleates assembly of the 50S subunit. The polypeptide is Large ribosomal subunit protein uL3 (Thermococcus gammatolerans (strain DSM 15229 / JCM 11827 / EJ3)).